Reading from the N-terminus, the 475-residue chain is Glutamate--tRNA ligase (475 aa).

Positions 8 to 18 (PSPTGTLHIGT) match the 'HIGH' region motif. Positions 247-251 (KLSKR) match the 'KMSKS' region motif. Lys-250 is an ATP binding site.

The protein belongs to the class-I aminoacyl-tRNA synthetase family. Glutamate--tRNA ligase type 1 subfamily. As to quaternary structure, monomer.

Its subcellular location is the cytoplasm. It catalyses the reaction tRNA(Glu) + L-glutamate + ATP = L-glutamyl-tRNA(Glu) + AMP + diphosphate. Catalyzes the attachment of glutamate to tRNA(Glu) in a two-step reaction: glutamate is first activated by ATP to form Glu-AMP and then transferred to the acceptor end of tRNA(Glu). The sequence is that of Glutamate--tRNA ligase from Synechococcus sp. (strain RCC307).